A 249-amino-acid polypeptide reads, in one-letter code: Flagellar L-ring protein (249 aa).

The N-terminal stretch at 1–25 (MSRLRTSHALRTAAALVAVGCLASG) is a signal peptide. Cys26 carries N-palmitoyl cysteine lipidation. The S-diacylglycerol cysteine moiety is linked to residue Cys26.

It belongs to the FlgH family. The basal body constitutes a major portion of the flagellar organelle and consists of four rings (L,P,S, and M) mounted on a central rod.

The protein resides in the cell outer membrane. Its subcellular location is the bacterial flagellum basal body. Assembles around the rod to form the L-ring and probably protects the motor/basal body from shearing forces during rotation. The sequence is that of Flagellar L-ring protein from Afipia carboxidovorans (strain ATCC 49405 / DSM 1227 / KCTC 32145 / OM5) (Oligotropha carboxidovorans).